The sequence spans 210 residues: Thymidylate kinase (210 aa).

An ATP-binding site is contributed by 11–18 (GLEGAGKS).

This sequence belongs to the thymidylate kinase family.

The enzyme catalyses dTMP + ATP = dTDP + ADP. Functionally, phosphorylation of dTMP to form dTDP in both de novo and salvage pathways of dTTP synthesis. This chain is Thymidylate kinase, found in Vibrio campbellii (strain ATCC BAA-1116).